Here is a 238-residue protein sequence, read N- to C-terminus: Pyruvate formate-lyase-activating enzyme (238 aa).

Residues 15-236 (VDGPGIRTVV…KKLEKYLKEL (222 aa)) form the Radical SAM core domain. Cysteine 29, cysteine 33, and cysteine 36 together coordinate [4Fe-4S] cluster. S-adenosyl-L-methionine contacts are provided by residues 35 to 37 (YCH), glycine 78, 126 to 128 (DIK), and histidine 199.

It belongs to the organic radical-activating enzymes family. Requires [4Fe-4S] cluster as cofactor.

The protein resides in the cytoplasm. It catalyses the reaction glycyl-[formate C-acetyltransferase] + reduced [flavodoxin] + S-adenosyl-L-methionine = glycin-2-yl radical-[formate C-acetyltransferase] + semiquinone [flavodoxin] + 5'-deoxyadenosine + L-methionine + H(+). Activation of pyruvate formate-lyase under anaerobic conditions by generation of an organic free radical, using S-adenosylmethionine and reduced flavodoxin as cosubstrates to produce 5'-deoxy-adenosine. The polypeptide is Pyruvate formate-lyase-activating enzyme (act) (Clostridium pasteurianum).